The chain runs to 260 residues: Large ribosomal subunit protein eL8A (260 aa).

Positions 1-34 are disordered; sequence MPSSKKVAPAPLATKSKASTSTKNPLFESTPKNF.

This sequence belongs to the eukaryotic ribosomal protein eL8 family. In terms of assembly, component of the large ribosomal subunit. Mature ribosomes consist of a small (40S) and a large (60S) subunit. The 40S subunit contains about 32 different proteins and 1 molecule of RNA (18S). The 60S subunit contains 45 different proteins and 3 molecules of RNA (25S, 5.8S and 5S).

It is found in the cytoplasm. Functionally, component of the ribosome, a large ribonucleoprotein complex responsible for the synthesis of proteins in the cell. The small ribosomal subunit (SSU) binds messenger RNAs (mRNAs) and translates the encoded message by selecting cognate aminoacyl-transfer RNA (tRNA) molecules. The large subunit (LSU) contains the ribosomal catalytic site termed the peptidyl transferase center (PTC), which catalyzes the formation of peptide bonds, thereby polymerizing the amino acids delivered by tRNAs into a polypeptide chain. The nascent polypeptides leave the ribosome through a tunnel in the LSU and interact with protein factors that function in enzymatic processing, targeting, and the membrane insertion of nascent chains at the exit of the ribosomal tunnel. This Candida albicans (strain SC5314 / ATCC MYA-2876) (Yeast) protein is Large ribosomal subunit protein eL8A.